Here is a 620-residue protein sequence, read N- to C-terminus: Chaperone protein DnaK (620 aa).

T197 carries the phosphothreonine; by autocatalysis modification. Residues 591 to 620 (AQKLGEAMANKNNAEQPKKKDDDVIDAEVE) are disordered.

This sequence belongs to the heat shock protein 70 family.

Functionally, acts as a chaperone. The polypeptide is Chaperone protein DnaK (Helicobacter pylori (strain HPAG1)).